Reading from the N-terminus, the 348-residue chain is Holliday junction branch migration complex subunit RuvB (348 aa).

The segment at M1–Y183 is large ATPase domain (RuvB-L). ATP is bound by residues L22, R23, G64, K67, T68, T69, E130–F132, R173, Y183, and R220. Position 68 (T68) interacts with Mg(2+). Residues T184 to D254 are small ATPAse domain (RuvB-S). Positions H257–E348 are head domain (RuvB-H). 3 residues coordinate DNA: R293, R312, and R317.

It belongs to the RuvB family. As to quaternary structure, homohexamer. Forms an RuvA(8)-RuvB(12)-Holliday junction (HJ) complex. HJ DNA is sandwiched between 2 RuvA tetramers; dsDNA enters through RuvA and exits via RuvB. An RuvB hexamer assembles on each DNA strand where it exits the tetramer. Each RuvB hexamer is contacted by two RuvA subunits (via domain III) on 2 adjacent RuvB subunits; this complex drives branch migration. In the full resolvosome a probable DNA-RuvA(4)-RuvB(12)-RuvC(2) complex forms which resolves the HJ.

The protein resides in the cytoplasm. The enzyme catalyses ATP + H2O = ADP + phosphate + H(+). The RuvA-RuvB-RuvC complex processes Holliday junction (HJ) DNA during genetic recombination and DNA repair, while the RuvA-RuvB complex plays an important role in the rescue of blocked DNA replication forks via replication fork reversal (RFR). RuvA specifically binds to HJ cruciform DNA, conferring on it an open structure. The RuvB hexamer acts as an ATP-dependent pump, pulling dsDNA into and through the RuvAB complex. RuvB forms 2 homohexamers on either side of HJ DNA bound by 1 or 2 RuvA tetramers; 4 subunits per hexamer contact DNA at a time. Coordinated motions by a converter formed by DNA-disengaged RuvB subunits stimulates ATP hydrolysis and nucleotide exchange. Immobilization of the converter enables RuvB to convert the ATP-contained energy into a lever motion, pulling 2 nucleotides of DNA out of the RuvA tetramer per ATP hydrolyzed, thus driving DNA branch migration. The RuvB motors rotate together with the DNA substrate, which together with the progressing nucleotide cycle form the mechanistic basis for DNA recombination by continuous HJ branch migration. Branch migration allows RuvC to scan DNA until it finds its consensus sequence, where it cleaves and resolves cruciform DNA. The sequence is that of Holliday junction branch migration complex subunit RuvB from Methylocella silvestris (strain DSM 15510 / CIP 108128 / LMG 27833 / NCIMB 13906 / BL2).